We begin with the raw amino-acid sequence, 203 residues long: Urease accessory protein UreE (203 aa).

The segment covering 170–190 (EHHGHSHSRSHDHDHDHDHQH) has biased composition (basic and acidic residues). A disordered region spans residues 170–203 (EHHGHSHSRSHDHDHDHDHQHGPSCSHGHHHGHR).

Belongs to the UreE family.

It localises to the cytoplasm. Functionally, involved in urease metallocenter assembly. Binds nickel. Probably functions as a nickel donor during metallocenter assembly. The protein is Urease accessory protein UreE of Burkholderia pseudomallei (strain 1710b).